Here is a 219-residue protein sequence, read N- to C-terminus: MGDILGAVYDLGHRPYLARRTVYEDRLILSTNGNICRAINLLTHDNRTSLVYHNNTKRIRFRGLLCAYHRPYCGFRALCRVMLCSLPRLCDIPINGSRDFVADPTRLDSSVNELLVSTGLVIHYDRVHDVPIHTDGFEVVDFTTVFRGPGNFLLPNATNFPRPTTTDQVYMVCLVNTVDCVLRFESELTVWIHSGLYTGDVLDVDNNVIQAPDGVDDDD.

In Beta macrocarpa (Beet), this protein is RNA-3 uncharacterized 24.7 kDa protein.